Consider the following 83-residue polypeptide: Large ribosomal subunit protein bL31B (83 aa).

Belongs to the bacterial ribosomal protein bL31 family. Type B subfamily. In terms of assembly, part of the 50S ribosomal subunit.

Binds the 23S rRNA. This is Large ribosomal subunit protein bL31B from Hydrogenovibrio crunogenus (strain DSM 25203 / XCL-2) (Thiomicrospira crunogena).